A 1066-amino-acid polypeptide reads, in one-letter code: Kinesin-like protein Klp61F (1066 aa).

One can recognise a Kinesin motor domain in the interval 19–356 (NIQVYVRVRP…LEYAHRAKNI (338 aa)). 103-110 (GQTGTGKT) is a binding site for ATP. The stretch at 362–462 (VNQKLTKKTV…KTEENLLNTK (101 aa)) forms a coiled coil. Thr-520 carries the phosphothreonine modification. Coiled coils occupy residues 540 to 569 (DRMQ…QLSQ), 639 to 738 (LMSK…QIKN), 808 to 875 (CSML…LITE), and 889 to 918 (DLVQ…ELVR). Thr-933 carries the post-translational modification Phosphothreonine. Position 949 is a phosphoserine (Ser-949). Residues 990–1002 (ELSETETIMNSTP) show a composition bias toward polar residues. 2 disordered regions span residues 990–1009 (ELSE…VDGV) and 1016–1066 (GTTR…ENVA). Low complexity predominate over residues 1033-1051 (GGKRSSSLSRSLTPSKTSP). A Phosphoserine modification is found at Ser-1043. The residue at position 1045 (Thr-1045) is a Phosphothreonine. Phosphoserine occurs at positions 1050 and 1054.

It belongs to the TRAFAC class myosin-kinesin ATPase superfamily. Kinesin family. BimC subfamily. As to quaternary structure, homotetramer. Consists of two pairs of polypeptides associated by coiled-coil interactions to form two homodimers. The homodimers are linked by lateral interactions between their coiled-coil regions to form a bipolar homotetramer consisting of a central rod with two motor domains projecting from either end. Parallel coiled coils extend from each pair of motor heads, switch to two antiparallel coiled coils in the central region and then back to parallel coiled coils. Interacts with Wee1. In terms of processing, phosphorylation is required for localization to mitotic spindles. Phosphorylation of Thr-933 during mitosis controls association with the spindle apparatus. Phosphorylated in vitro by Wee1.

The protein localises to the cytoplasm. Its subcellular location is the cytoskeleton. It is found in the spindle. It localises to the spindle pole. Its function is as follows. Important role in mitotic dividing cells. Microtubule motor required for spindle body separation. Slow plus-end directed microtubule motor capable of cross-linking and sliding apart antiparallel microtubules, thereby pushing apart the associated spindle poles during spindle assembly and function. Forms cross-links between microtubules within interpolar microtubule bundles. Contributes to the length of the metaphase spindle, maintains the prometaphase spindle by antagonizing Ncd, drives anaphase B, and also contributes to normal chromosome congression, kinetochore spacing, and anaphase A rates. Displays microtubule-stimulated ATPase activity. Required for normal fusome organization. Required in non-mitotic cells for transport of secretory proteins from the Golgi complex to the cell surface. The chain is Kinesin-like protein Klp61F from Drosophila melanogaster (Fruit fly).